A 113-amino-acid polypeptide reads, in one-letter code: UPF0321 protein C569.02c (113 aa).

The first 17 residues, 1-17, serve as a signal peptide directing secretion; that stretch reads MLLLFCICCAFIKLVLA. Asn-20, Asn-39, and Asn-65 each carry an N-linked (GlcNAc...) asparagine glycan.

The protein belongs to the UPF0321 family.

The polypeptide is UPF0321 protein C569.02c (Schizosaccharomyces pombe (strain 972 / ATCC 24843) (Fission yeast)).